The primary structure comprises 640 residues: Threonine--tRNA ligase (640 aa).

Positions 1–61 (MPIITLPDGN…EKDSEVNIIT (61 aa)) constitute a TGS domain. A catalytic region spans residues 242–533 (DHRRIAKQMS…LIEHYAGRMP (292 aa)). Zn(2+)-binding residues include C333, H384, and H510.

This sequence belongs to the class-II aminoacyl-tRNA synthetase family. As to quaternary structure, homodimer. Requires Zn(2+) as cofactor.

It localises to the cytoplasm. The enzyme catalyses tRNA(Thr) + L-threonine + ATP = L-threonyl-tRNA(Thr) + AMP + diphosphate + H(+). Its function is as follows. Catalyzes the attachment of threonine to tRNA(Thr) in a two-step reaction: L-threonine is first activated by ATP to form Thr-AMP and then transferred to the acceptor end of tRNA(Thr). Also edits incorrectly charged L-seryl-tRNA(Thr). This chain is Threonine--tRNA ligase, found in Prochlorococcus marinus (strain MIT 9303).